A 506-amino-acid polypeptide reads, in one-letter code: MAP kinase kinase MKK2/SSP33 (506 aa).

The interval 1–69 (MASMFRPPES…TSTTSSMASN (69 aa)) is disordered. Over residues 26–52 (LVQNAKSTNDGQHLNRSPYSSVNESPY) the composition is skewed to polar residues. Positions 53–69 (SNNSTSATSTTSSMASN) are enriched in low complexity. The region spanning 214–481 (ITTLGILGEG…PRQMLKHPWI (268 aa)) is the Protein kinase domain. Residues 220 to 228 (LGEGAGGSV) and K243 each bind ATP. D342 serves as the catalytic Proton acceptor.

This sequence belongs to the protein kinase superfamily. STE Ser/Thr protein kinase family. MAP kinase kinase subfamily.

The enzyme catalyses L-seryl-[protein] + ATP = O-phospho-L-seryl-[protein] + ADP + H(+). The catalysed reaction is L-threonyl-[protein] + ATP = O-phospho-L-threonyl-[protein] + ADP + H(+). It catalyses the reaction L-tyrosyl-[protein] + ATP = O-phospho-L-tyrosyl-[protein] + ADP + H(+). Functionally, serine/threonine protein kinase involved in a signal transduction pathway that plays a role in yeast cell morphogenesis and cell growth. This pathway seems to start by SMP3; then involves the kinase PKC1 that may act on the BCK1 kinase that then phosphorylates MKK1 and MKK2 which themselves phosphorylate the MPK1 kinase. This chain is MAP kinase kinase MKK2/SSP33 (MKK2), found in Saccharomyces cerevisiae (strain ATCC 204508 / S288c) (Baker's yeast).